Consider the following 173-residue polypeptide: 2-C-methyl-D-erythritol 2,4-cyclodiphosphate synthase (173 aa).

A divalent metal cation is bound by residues Asp17 and His19. 4-CDP-2-C-methyl-D-erythritol 2-phosphate contacts are provided by residues 17 to 19 (DVH) and 49 to 50 (HS). His57 lines the a divalent metal cation pocket. 4-CDP-2-C-methyl-D-erythritol 2-phosphate-binding positions include 76 to 80 (FPNTD), 147 to 150 (TTTE), Phe154, and Arg157.

The protein belongs to the IspF family. In terms of assembly, homotrimer. The cofactor is a divalent metal cation.

It carries out the reaction 4-CDP-2-C-methyl-D-erythritol 2-phosphate = 2-C-methyl-D-erythritol 2,4-cyclic diphosphate + CMP. It participates in isoprenoid biosynthesis; isopentenyl diphosphate biosynthesis via DXP pathway; isopentenyl diphosphate from 1-deoxy-D-xylulose 5-phosphate: step 4/6. In terms of biological role, involved in the biosynthesis of isopentenyl diphosphate (IPP) and dimethylallyl diphosphate (DMAPP), two major building blocks of isoprenoid compounds. Catalyzes the conversion of 4-diphosphocytidyl-2-C-methyl-D-erythritol 2-phosphate (CDP-ME2P) to 2-C-methyl-D-erythritol 2,4-cyclodiphosphate (ME-CPP) with a corresponding release of cytidine 5-monophosphate (CMP). The protein is 2-C-methyl-D-erythritol 2,4-cyclodiphosphate synthase of Ehrlichia chaffeensis (strain ATCC CRL-10679 / Arkansas).